The primary structure comprises 214 residues: MADS-box protein SOC1 (214 aa).

The region spanning 3 to 57 (RGKTQMKRIENATSRQVTFSKRRNGLLKKAFELSVLCDAEVSLIIFSPKGKLYEF) is the MADS-box domain. Residues 87 to 177 (MQHLKYEAAN…SEKWGSHESE (91 aa)) form the K-box domain. Over residues 162–177 (AENEKLSEKWGSHESE) the composition is skewed to basic and acidic residues. Residues 162-214 (AENEKLSEKWGSHESEVWSNKNQESTGRGDEESSPSSEVETQLFIGLPCSSRK) are disordered. Over residues 178 to 187 (VWSNKNQEST) the composition is skewed to polar residues.

As to quaternary structure, forms a heterodimer with AGL24 through MADS-box domain. Interacts with AGL15, AGL16 and AGL19. Interacts with OXS3 in the nucleus. Widely expressed. Not found in the apical meristem of short-day grown plants in vegetative stage.

Its subcellular location is the nucleus. The protein resides in the cytoplasm. Transcription activator active in flowering time control. May integrate signals from the photoperiod, vernalization and autonomous floral induction pathways. Can modulate class B and C homeotic genes expression. When associated with AGL24, mediates effect of gibberellins on flowering under short-day conditions, and regulates the expression of LEAFY (LFY), which links floral induction and floral development. This Arabidopsis thaliana (Mouse-ear cress) protein is MADS-box protein SOC1.